Reading from the N-terminus, the 348-residue chain is Histidinol-phosphate aminotransferase (348 aa).

Lysine 210 is subject to N6-(pyridoxal phosphate)lysine.

This sequence belongs to the class-II pyridoxal-phosphate-dependent aminotransferase family. Histidinol-phosphate aminotransferase subfamily. In terms of assembly, homodimer. Pyridoxal 5'-phosphate serves as cofactor.

The enzyme catalyses L-histidinol phosphate + 2-oxoglutarate = 3-(imidazol-4-yl)-2-oxopropyl phosphate + L-glutamate. Its pathway is amino-acid biosynthesis; L-histidine biosynthesis; L-histidine from 5-phospho-alpha-D-ribose 1-diphosphate: step 7/9. The chain is Histidinol-phosphate aminotransferase from Pseudomonas putida (strain ATCC 700007 / DSM 6899 / JCM 31910 / BCRC 17059 / LMG 24140 / F1).